A 285-amino-acid polypeptide reads, in one-letter code: Ribonuclease Z (285 aa).

Zn(2+) contacts are provided by His61, His63, Asp65, His66, His152, Asp175, and His239. Asp65 (proton acceptor) is an active-site residue.

This sequence belongs to the RNase Z family. Homodimer. Zn(2+) serves as cofactor.

It catalyses the reaction Endonucleolytic cleavage of RNA, removing extra 3' nucleotides from tRNA precursor, generating 3' termini of tRNAs. A 3'-hydroxy group is left at the tRNA terminus and a 5'-phosphoryl group is left at the trailer molecule.. Its function is as follows. Zinc phosphodiesterase, which displays some tRNA 3'-processing endonuclease activity. Probably involved in tRNA maturation, by removing a 3'-trailer from precursor tRNA. This Mycobacterium sp. (strain JLS) protein is Ribonuclease Z.